The chain runs to 349 residues: tRNA N6-adenosine threonylcarbamoyltransferase (349 aa).

The Fe cation site is built by His-113 and His-117. Residues 135–139 (LVSGG), Asp-169, Gly-182, Asp-186, and Asn-281 contribute to the substrate site. Residue Asp-309 participates in Fe cation binding.

This sequence belongs to the KAE1 / TsaD family. Fe(2+) is required as a cofactor.

Its subcellular location is the cytoplasm. The catalysed reaction is L-threonylcarbamoyladenylate + adenosine(37) in tRNA = N(6)-L-threonylcarbamoyladenosine(37) in tRNA + AMP + H(+). Functionally, required for the formation of a threonylcarbamoyl group on adenosine at position 37 (t(6)A37) in tRNAs that read codons beginning with adenine. Is involved in the transfer of the threonylcarbamoyl moiety of threonylcarbamoyl-AMP (TC-AMP) to the N6 group of A37, together with TsaE and TsaB. TsaD likely plays a direct catalytic role in this reaction. In Corynebacterium aurimucosum (strain ATCC 700975 / DSM 44827 / CIP 107346 / CN-1) (Corynebacterium nigricans), this protein is tRNA N6-adenosine threonylcarbamoyltransferase.